The sequence spans 375 residues: Growth/differentiation factor 8 (375 aa).

An N-terminal signal peptide occupies residues methionine 1–alanine 18. The propeptide occupies glycine 19–arginine 266. 2 N-linked (GlcNAc...) asparagine glycosylation sites follow: asparagine 47 and asparagine 71. 4 disulfides stabilise this stretch: cysteine 272-cysteine 282, cysteine 281-cysteine 340, cysteine 309-cysteine 372, and cysteine 313-cysteine 374.

Belongs to the TGF-beta family. In terms of assembly, homodimer; disulfide-linked. Interacts with WFIKKN2, leading to inhibit its activity. Interacts with FSTL3. Post-translationally, synthesized as large precursor molecule that undergoes proteolytic cleavage to generate an N-terminal propeptide and a disulfide linked C-terminal dimer, which is the biologically active molecule. The circulating form consists of a latent complex of the C-terminal dimer and other proteins, including its propeptide, which maintain the C-terminal dimer in a latent, inactive state. Ligand activation requires additional cleavage of the prodomain by a tolloid-like metalloproteinase.

The protein localises to the secreted. In terms of biological role, acts specifically as a negative regulator of skeletal muscle growth. This Bos gaurus (Seladang) protein is Growth/differentiation factor 8 (MSTN).